The chain runs to 908 residues: Mycobactin import ATP-binding/permease protein IrtA (908 aa).

Residues 1–329 are Cytoplasmic-facing; sequence MARGFQGVML…SRLLAPLKKP (329 aa). Residues 15–124 enclose the FAD-binding FR-type domain; the sequence is ARDHQATVVD…MGSRGFSVPE (110 aa). A siderophore interaction domain region spans residues 16 to 245; that stretch reads RDHQATVVDK…AQAYWTEGRA (230 aa). Residues 70 to 73, 87 to 91, 97 to 98, and 241 to 243 contribute to the FAD site; these read RAYT, DMVLH, AS, and TEG. The interval 245 to 311 is disordered; the sequence is AMGSSRGETS…GAAQPRTPVR (67 aa). Residues 253 to 309 show a composition bias toward low complexity; the sequence is TSTPAKPAAKTAPAKAAAKPAAASGAGTPEHAAAPAAATTGAPQAAPAPGAAQPRTP. Residues 330 to 350 form a helical membrane-spanning segment; it reads LIVSGVLQALITLIELAPFVL. The 283-residue stretch at 331 to 613 folds into the ABC transmembrane type-1 domain; it reads IVSGVLQALI…IGYGLSGIQT (283 aa). Over 351–371 the chain is Periplasmic; that stretch reads LVELARLLLGGAEAERLWTLG. The helical transmembrane segment at 372-392 threads the bilayer; the sequence is LTAVSLIGLGAVLAAAMTLWL. Residues 393–444 are Cytoplasmic-facing; that stretch reads HRVDARFAHELRGRLLTKLSRLPLGWFTRRGSASTKQLVQDDTLALHYLITH. Residues 445-465 traverse the membrane as a helical segment; that stretch reads AIPDAVAAVVAPVAVLVYLFV. Over 466–469 the chain is Periplasmic; that stretch reads ADWR. Residues 470-490 form a helical membrane-spanning segment; the sequence is VALVLFIPVLVYLVLMSVMTI. Topologically, residues 491–557 are cytoplasmic; that stretch reads QSGSKIAQAP…PFVGKKTLMD (67 aa). Residues 558–578 traverse the membrane as a helical segment; it reads LVTRPATFLWIILVAGVPLVV. The Periplasmic segment spans residues 579–586; the sequence is TGRMDPVN. Residues 587–607 traverse the membrane as a helical segment; that stretch reads LLPFLLLGTTFGARLLGIGYG. The Cytoplasmic portion of the chain corresponds to 608–908; the sequence is LSGIQTGMLA…VSADAVEVGR (301 aa). Residues 654-887 form the ABC transporter domain; it reads VELDRVSFEY…GGRYRGLWDS (234 aa). 687–694 is a binding site for ATP; sequence GPSGSGKS.

This sequence belongs to the ABC transporter superfamily. Siderophore-Fe(3+) uptake transporter (SIUT) (TC 3.A.1.21) family. As to quaternary structure, forms a heterodimer with IrtB. FAD serves as cofactor.

Its subcellular location is the cell inner membrane. The ATPase activity of IrtAB is stimulated more than 38-fold in the presence of Fe-MBT, and more than 10-fold in the presence of Fe-cMBT. Functionally, part of the ABC transporter complex IrtAB involved in the import of iron-bound mycobactin (Fe-MBT) and carboxymycobactin (Fe-cMBT). Has a preference for Fe-MBT over Fe-cMBT. Mycobactins are then reduced by the siderophore interaction domain to facilitate iron release in the bacterial cell. Transmembrane domains (TMD) form a pore in the membrane and the ATP-binding domain (NBD) is responsible for energy generation. The chain is Mycobactin import ATP-binding/permease protein IrtA from Mycolicibacterium thermoresistibile (strain ATCC 19527 / DSM 44167 / CIP 105390 / JCM 6362 / NCTC 10409 / 316) (Mycobacterium thermoresistibile).